The primary structure comprises 574 residues: Developmental and secondary metabolism regulator veA (574 aa).

Disordered stretches follow at residues Met1–Thr22, Glu39–Pro60, Arg255–Lys500, and Arg513–Arg540. Residues Gly25–Arg230 enclose the Velvet domain. Positions Glu39 to Cys44 match the Nuclear localization signal motif. 2 stretches are compositionally biased toward pro residues: residues Arg314–Ala323 and Pro330–His341. 4 stretches are compositionally biased toward polar residues: residues Pro343–Ser353, His385–Glu394, Arg406–Pro415, and Val448–Thr458. Residues Gln457–Lys501 form a PEST region. Composition is skewed to low complexity over residues Pro459–Ser474 and Ser482–Ser493. The span at Arg513–Pro525 shows a compositional bias: basic and acidic residues.

Belongs to the velvet family. VeA subfamily. In terms of assembly, component of the heterotrimeric velvet complex composed of laeA, veA and velB; VeA acting as a bridging protein between laeA and velB.

Its subcellular location is the nucleus. It is found in the cytoplasm. Functionally, component of the velvet transcription factor complex that controls sexual/asexual developmental ratio in response to light, promoting sexual development in the darkness while stimulating asexual sporulation under illumination. The velvet complex hat acts as a global regulator for secondary metabolite gene expression. Controls the expression of the penicillin gene cluster. The protein is Developmental and secondary metabolism regulator veA of Aspergillus oryzae (strain ATCC 42149 / RIB 40) (Yellow koji mold).